The sequence spans 319 residues: Probable cystathionine gamma-synthase (319 aa).

Lys197 is subject to N6-(pyridoxal phosphate)lysine.

Belongs to the trans-sulfuration enzymes family. In terms of assembly, homotetramer. Pyridoxal 5'-phosphate is required as a cofactor.

The protein resides in the cytoplasm. The enzyme catalyses O-succinyl-L-homoserine + L-cysteine = L,L-cystathionine + succinate + H(+). Catalyzes the formation of L-cystathionine from O-succinyl-L-homoserine (OSHS) and L-cysteine, via a gamma-replacement reaction. In the absence of thiol, catalyzes gamma-elimination to form 2-oxobutanoate, succinate and ammonia. The protein is Probable cystathionine gamma-synthase (metB) of Herpetosiphon aurantiacus (Herpetosiphon giganteus).